A 138-amino-acid chain; its full sequence is ATP synthase epsilon chain (138 aa).

Belongs to the ATPase epsilon chain family. F-type ATPases have 2 components, CF(1) - the catalytic core - and CF(0) - the membrane proton channel. CF(1) has five subunits: alpha(3), beta(3), gamma(1), delta(1), epsilon(1). CF(0) has three main subunits: a, b and c.

The protein localises to the cell inner membrane. Functionally, produces ATP from ADP in the presence of a proton gradient across the membrane. The protein is ATP synthase epsilon chain of Bartonella henselae (strain ATCC 49882 / DSM 28221 / CCUG 30454 / Houston 1) (Rochalimaea henselae).